The chain runs to 423 residues: Glutamyl-tRNA reductase (423 aa).

Substrate contacts are provided by residues 49–52 (TCNR), serine 109, 114–116 (EGQ), and glutamine 120. Catalysis depends on cysteine 50, which acts as the Nucleophile. 189–194 (GAGETG) is an NADP(+) binding site.

This sequence belongs to the glutamyl-tRNA reductase family. As to quaternary structure, homodimer.

It carries out the reaction (S)-4-amino-5-oxopentanoate + tRNA(Glu) + NADP(+) = L-glutamyl-tRNA(Glu) + NADPH + H(+). It participates in porphyrin-containing compound metabolism; protoporphyrin-IX biosynthesis; 5-aminolevulinate from L-glutamyl-tRNA(Glu): step 1/2. Its pathway is porphyrin-containing compound metabolism; chlorophyll biosynthesis. Its function is as follows. Catalyzes the NADPH-dependent reduction of glutamyl-tRNA(Glu) to glutamate 1-semialdehyde (GSA). This chain is Glutamyl-tRNA reductase, found in Chlorobium limicola (strain DSM 245 / NBRC 103803 / 6330).